The chain runs to 334 residues: Thioredoxin reductase (334 aa).

FAD-binding positions include 10–13 (SGPA), 39–40 (IA), Q44, N53, V86, C143, D287, and 294–296 (RQA). Cysteines 140 and 143 form a disulfide.

It belongs to the class-II pyridine nucleotide-disulfide oxidoreductase family. As to quaternary structure, homodimer. The cofactor is FAD.

Its subcellular location is the cytoplasm. The catalysed reaction is [thioredoxin]-dithiol + NADP(+) = [thioredoxin]-disulfide + NADPH + H(+). In Neurospora crassa (strain ATCC 24698 / 74-OR23-1A / CBS 708.71 / DSM 1257 / FGSC 987), this protein is Thioredoxin reductase (cys-9).